Consider the following 284-residue polypeptide: Pheromone-regulated membrane protein 4 (284 aa).

Residues 20 to 38 (IISLTLVLLGVFSFLLLTW) form a helical membrane-spanning segment. The Glutaredoxin domain occupies 157–272 (RTDFLDIIRT…PLLKSEARGN (116 aa)).

It is found in the membrane. The chain is Pheromone-regulated membrane protein 4 (PRM4) from Saccharomyces cerevisiae (strain ATCC 204508 / S288c) (Baker's yeast).